Consider the following 492-residue polypeptide: Replication factor C large subunit (492 aa).

46–53 (GPPGSGKT) provides a ligand contact to ATP. A disordered region spans residues 445–492 (VIPKRPKISDNQISEILTKDNNPKDDVKKASKKPESTSKKQATLDKFF). Positions 461–482 (LTKDNNPKDDVKKASKKPESTS) are enriched in basic and acidic residues.

The protein belongs to the activator 1 small subunits family. RfcL subfamily. Heteromultimer composed of small subunits (RfcS) and large subunits (RfcL).

Functionally, part of the RFC clamp loader complex which loads the PCNA sliding clamp onto DNA. The polypeptide is Replication factor C large subunit (Methanococcus vannielii (strain ATCC 35089 / DSM 1224 / JCM 13029 / OCM 148 / SB)).